The chain runs to 507 residues: Autophagy-related protein 22 (507 aa).

The next 6 helical transmembrane spans lie at 24–44, 90–110, 126–146, 150–170, 203–223, and 234–254; these read VFGW…AMST, SFAL…VISV, VLLS…LLRG, YILA…NVVG, RGSG…VWLL, and VAVL…IWML. A glycan (N-linked (GlcNAc...) asparagine) is linked at Asn262. Helical transmembrane passes span 295-315, 329-349, 365-385, 393-413, 433-453, and 462-482; these read VLIF…INSA, VNLV…AYFV, LIYL…GFVF, PFEM…LAAV, LFSI…GLIT, and SFYF…ALNV. Asn496 is a glycosylation site (N-linked (GlcNAc...) asparagine).

Belongs to the ATG22 family.

The protein localises to the vacuole membrane. In terms of biological role, vacuolar effluxer which mediate the efflux of amino acids resulting from autophagic degradation. The release of autophagic amino acids allows the maintenance of protein synthesis and viability during nitrogen starvation. The protein is Autophagy-related protein 22 (ATG22) of Eremothecium gossypii (strain ATCC 10895 / CBS 109.51 / FGSC 9923 / NRRL Y-1056) (Yeast).